The sequence spans 1219 residues: Regulator of telomere elongation helicase 1 (1219 aa).

Positions 7–296 (NGVTVDFPFQ…TKAAQQGEPH (290 aa)) constitute a Helicase ATP-binding domain. Residue 42–49 (SPTGTGKT) participates in ATP binding. Positions 145, 163, 172, and 207 each coordinate [4Fe-4S] cluster. The short motif at 151 to 167 (KKQESNHLQIHLCRKKV) is the Nuclear localization signal element. A DEAH box motif is present at residues 250 to 253 (DEAH). Disordered stretches follow at residues 287–306 (TKAA…SPSP), 757–786 (PAPA…FFST), 839–877 (EHSE…GRKK), 979–1005 (RPEH…PDPK), 1017–1054 (DPQE…RAGK), 1132–1151 (CTDL…PQEE), and 1159–1219 (LTHR…EWGL). Low complexity predominate over residues 757-766 (PAPAPRATAP). Positions 863–873 (SEKRPAEEPRG) are enriched in basic and acidic residues. Residues 871-877 (PRGGRKK) carry the Nuclear localization signal motif. The segment covering 1176–1185 (KTQSKISSFL) has biased composition (polar residues). The PIP-box signature appears at 1178 to 1185 (QSKISSFL). Over residues 1200-1219 (AGPSQSSGPPHGPAASEWGL) the composition is skewed to low complexity.

It belongs to the helicase family. RAD3/XPD subfamily. As to quaternary structure, interacts with TERF1. Interacts (via PIP-box) with PCNA; the interaction is direct and essential for suppressing telomere fragility. Interacts with MMS19; the interaction mediates the association of RTEL1 with the cytosolic iron-sulfur protein assembly (CIA) complex.

The protein resides in the nucleus. It catalyses the reaction ATP + H2O = ADP + phosphate + H(+). A probable ATP-dependent DNA helicase implicated in telomere-length regulation, DNA repair and the maintenance of genomic stability. Acts as an anti-recombinase to counteract toxic recombination and limit crossover during meiosis. Regulates meiotic recombination and crossover homeostasis by physically dissociating strand invasion events and thereby promotes noncrossover repair by meiotic synthesis dependent strand annealing (SDSA) as well as disassembly of D loop recombination intermediates. Also disassembles T loops and prevents telomere fragility by counteracting telomeric G4-DNA structures, which together ensure the dynamics and stability of the telomere. The protein is Regulator of telomere elongation helicase 1 of Homo sapiens (Human).